A 337-amino-acid polypeptide reads, in one-letter code: MLRIAVDCMGGDYAPLEIVRGCILAAKELGYKIYLVGDKEQIIPILEKAKEHNNSLLEVVHAPDKVEMHEPPSNVLKKKNSSLYVAGMLVRKGEADGLVSAGNTGAVLAVGKFIVGAEEEVERPSIGVALPNPKGKTVLIDVGANVDCKPKHLVQFAVIGHTYAEEILGIKNPRVGILSIGEEEGKGNELVKETYPLLKATKLNFKGNAEGRDIYAGTFDVIVCDGFVGNVILKASESLGLAVVQMIKEEIKRSILAKLGALLLMPALNRFKKKADFAEYGGIPLLGAKKPVIITHGRANAKAIKNAVRVAGEFLNTDFNKKLVYNLKTLIPEGVKV.

The protein belongs to the PlsX family. Homodimer. Probably interacts with PlsY.

Its subcellular location is the cytoplasm. It catalyses the reaction a fatty acyl-[ACP] + phosphate = an acyl phosphate + holo-[ACP]. Its pathway is lipid metabolism; phospholipid metabolism. Catalyzes the reversible formation of acyl-phosphate (acyl-PO(4)) from acyl-[acyl-carrier-protein] (acyl-ACP). This enzyme utilizes acyl-ACP as fatty acyl donor, but not acyl-CoA. The sequence is that of Phosphate acyltransferase from Aquifex aeolicus (strain VF5).